The following is a 239-amino-acid chain: Small ribosomal subunit protein uS2 (239 aa).

Belongs to the universal ribosomal protein uS2 family.

This Prochlorococcus marinus (strain MIT 9313) protein is Small ribosomal subunit protein uS2.